We begin with the raw amino-acid sequence, 211 residues long: Urease accessory protein UreE (211 aa).

A disordered region spans residues 134–211; sequence FDPEGGAYAP…DHHGHGHEHK (78 aa). The span at 147–202 shows a compositional bias: basic and acidic residues; that stretch reads PSHDHAGHDHAHDSHAHHDHDHGKHAQHDHGKHDHAHHDHAAHDDHHVHDEHCGHD.

It belongs to the UreE family.

It localises to the cytoplasm. Involved in urease metallocenter assembly. Binds nickel. Probably functions as a nickel donor during metallocenter assembly. This chain is Urease accessory protein UreE, found in Rhodopseudomonas palustris (strain BisB18).